A 3859-amino-acid polypeptide reads, in one-letter code: Transformation/transcription domain-associated protein (3859 aa).

At A2 the chain carries N-acetylalanine. A compositionally biased stretch (pro residues) spans 491–526; that stretch reads PAAPGPAPSPAPVPAPPPPPPPPPPATPVTPAPVPP. The interval 491-541 is disordered; the sequence is PAAPGPAPSPAPVPAPPPPPPPPPPATPVTPAPVPPFEKQGEKDKEDKQTF. The segment covering 529–539 has biased composition (basic and acidic residues); the sequence is KQGEKDKEDKQ. At S1628 the chain carries Phosphoserine. The interaction with TP53 stretch occupies residues 2010–2388; the sequence is SEVVIKWELQ…SPMAANQTPT (379 aa). The disordered stretch occupies residues 2023–2044; the sequence is DQQPDSDMDPNSSGEGVNSVSS. A compositionally biased stretch (low complexity) spans 2033-2044; the sequence is NSSGEGVNSVSS. Residues 2047 to 2062 carry the Bipartite nuclear localization signal motif; the sequence is KRGLSVDSAQEVKRFR. Phosphoserine occurs at positions 2051 and 2077. K2543 is covalently cross-linked (Glycyl lysine isopeptide (Lys-Gly) (interchain with G-Cter in SUMO2)). The span at 2543–2554 shows a compositional bias: basic and acidic residues; the sequence is KQEPRERENSES. Positions 2543–2578 are disordered; sequence KQEPRERENSESKEEDVEIDIELAPGDQTSTPKTKE. Residues 2692 to 3275 enclose the FAT domain; it reads VLKYLGKTHN…YFPIRTLYLT (584 aa). K3078 is modified (N6-acetyllysine). The PI3K/PI4K catalytic domain maps to 3500–3823; that stretch reads MPRVEIVQKH…AVTAIMTRLH (324 aa). Residues 3506–3512 form a G-loop region; it reads VQKHNTA. Residues 3687–3695 form a catalytic loop region; that stretch reads HLNRLNPEM. Residues 3707 to 3732 form an activation loop region; that stretch reads VAYFRFDINDATGDLDANRPVPFRLT. The region spanning 3827 to 3859 is the FATC domain; the sequence is QFEGGESKVNTLVAAANSLDNLCRMDPAWHPWL.

This sequence belongs to the PI3/PI4-kinase family. TRA1 subfamily. In terms of assembly, interacts with MYC, E2F1 and E2F4 transcription factors. Interacts directly with p53/TP53. Interacts with GCN5L2. Component of various HAT complexes. Component of the PCAF complex, at least composed of TADA2L/ADA2, SUPT3H, TADA3L/ADA3, TAF5L/PAF65-beta, TAF6L/PAF65-alpha, TAF10/TAFII30, TAF12/TAFII20, TAF9/TAFII31 and TRRAP. Component of the TFTC-HAT complex, at least composed of TAF5L, TAF6L, TADA3L, SUPT3H/SPT3, TAF2/TAFII150, TAF4/TAFII135, TAF5/TAFII100, GCN5L2/GCN5, TAF10 and TRRAP. Component of the NuA4 histone acetyltransferase complex which contains the catalytic subunit KAT5/TIP60 and the subunits EP400, TRRAP/PAF400, BRD8/SMAP, EPC1, DMAP1/DNMAP1, RUVBL1/TIP49, RUVBL2, ING3, actin, ACTL6A/BAF53A, MORF4L1/MRG15, MORF4L2/MRGX, MRGBP, YEATS4/GAS41, VPS72/YL1 and MEAF6. Component of the STAGA complex, at least composed of SUPT3H, GCN5L2, SUPT7L, TAF5L, TAF6L, TADA3L, TAD1L, TAF10, TAF12, TRRAP and TAF9. The STAGA core complex is associated with a subcomplex required for histone deubiquitination composed of ATXN7L3, ENY2 and USP22. Component of the BAF53 complex, at least composed of BAF53A, RUVBL1, SMARCA4/BRG1, and TRRAP, which preferentially acetylates histone H4 (and H2A) within nucleosomes. Interacts with NPAT. Interaction with TELO2 and TTI1. Component of a SWR1-like complex.

The protein resides in the nucleus. In terms of biological role, adapter protein, which is found in various multiprotein chromatin complexes with histone acetyltransferase activity (HAT), which gives a specific tag for epigenetic transcription activation. Component of the NuA4 histone acetyltransferase complex which is responsible for acetylation of nucleosomal histones H4 and H2A. Plays a central role in MYC transcription activation, and also participates in cell transformation by MYC. Required for p53/TP53-, E2F1- and E2F4-mediated transcription activation. Also involved in transcription activation mediated by the adenovirus E1A, a viral oncoprotein that deregulates transcription of key genes. Probably acts by linking transcription factors such as E1A, MYC or E2F1 to HAT complexes such as STAGA thereby allowing transcription activation. Probably not required in the steps following histone acetylation in processes of transcription activation. May be required for the mitotic checkpoint and normal cell cycle progression. Component of a SWR1-like complex that specifically mediates the removal of histone H2A.Z/H2AZ1 from the nucleosome. May play a role in the formation and maintenance of the auditory system. This Homo sapiens (Human) protein is Transformation/transcription domain-associated protein (TRRAP).